The chain runs to 413 residues: Histidine--tRNA ligase (413 aa).

This sequence belongs to the class-II aminoacyl-tRNA synthetase family. As to quaternary structure, homodimer.

Its subcellular location is the cytoplasm. The catalysed reaction is tRNA(His) + L-histidine + ATP = L-histidyl-tRNA(His) + AMP + diphosphate + H(+). This Geobacter sulfurreducens (strain ATCC 51573 / DSM 12127 / PCA) protein is Histidine--tRNA ligase.